We begin with the raw amino-acid sequence, 312 residues long: DNA-directed RNA polymerase subunit alpha (312 aa).

The alpha N-terminal domain (alpha-NTD) stretch occupies residues 1–226 (MIEFEKPIIT…EHLNLFTDLT (226 aa)). The interval 243–312 (DEKVLDRTIE…DLGLGLKNDK (70 aa)) is alpha C-terminal domain (alpha-CTD).

The protein belongs to the RNA polymerase alpha chain family. In terms of assembly, homodimer. The RNAP catalytic core consists of 2 alpha, 1 beta, 1 beta' and 1 omega subunit. When a sigma factor is associated with the core the holoenzyme is formed, which can initiate transcription.

The enzyme catalyses RNA(n) + a ribonucleoside 5'-triphosphate = RNA(n+1) + diphosphate. Its function is as follows. DNA-dependent RNA polymerase catalyzes the transcription of DNA into RNA using the four ribonucleoside triphosphates as substrates. The protein is DNA-directed RNA polymerase subunit alpha of Streptococcus agalactiae serotype III (strain NEM316).